Here is a 126-residue protein sequence, read N- to C-terminus: MVMKNVLLVGAGGFAGSVARYLVALAVPFSGTGFPFATFAVNLLGSFLIGFISELALSTTLLSPEARLLLTTGFCGGFTTFSTAMYETGGLMRDGEALYASLYVAGSLAGGLACLFSGTLLAKLWQ.

The next 4 membrane-spanning stretches (helical) occupy residues 6–26 (VLLV…VALA), 32–52 (TGFP…IGFI), 68–90 (LLLT…ETGG), and 102–122 (LYVA…TLLA). Na(+) is bound by residues glycine 76 and threonine 79.

The protein belongs to the fluoride channel Fluc/FEX (TC 1.A.43) family.

It is found in the cell inner membrane. The enzyme catalyses fluoride(in) = fluoride(out). Its activity is regulated as follows. Na(+) is not transported, but it plays an essential structural role and its presence is essential for fluoride channel function. In terms of biological role, fluoride-specific ion channel. Important for reducing fluoride concentration in the cell, thus reducing its toxicity. The chain is Fluoride-specific ion channel FluC from Chlorobaculum tepidum (strain ATCC 49652 / DSM 12025 / NBRC 103806 / TLS) (Chlorobium tepidum).